Consider the following 119-residue polypeptide: Beta-2-microglobulin (119 aa).

Positions 1–20 are cleaved as a signal peptide; the sequence is MARFVVAALLVLLSLSGLEA. Residues 25-114 form the Ig-like C1-type domain; that stretch reads PKIQVYSRHP…MTFPAPKTVK (90 aa). An intrachain disulfide couples Cys45 to Cys100.

It belongs to the beta-2-microglobulin family. In terms of assembly, heterodimer of an alpha chain and a beta chain. Beta-2-microglobulin is the beta-chain of major histocompatibility complex class I molecules.

It is found in the secreted. Its function is as follows. Component of the class I major histocompatibility complex (MHC). Involved in the presentation of peptide antigens to the immune system. The sequence is that of Beta-2-microglobulin (B2M) from Pithecia irrorata (Gray monk saki).